We begin with the raw amino-acid sequence, 744 residues long: Scytalone dehydratase-like protein Arp1 (744 aa).

Substrate is bound at residue Y621. Residues H656 and H681 contribute to the active site. N702 is a substrate binding site.

The protein belongs to the scytalone dehydratase family. As to quaternary structure, homotrimer. Each subunit contains an active site, located in the central part of the hydrophobic core of the monomer, which functions independently.

Functionally, scytalone dehydratase-like protein; part of the Pks2 gene cluster that mediates the formation of infectious structures (appressoria), enabling these fungi to kill insects faster. The product of the Pks2 gene cluster is different from the one of Pks1 and has still not been identified. This chain is Scytalone dehydratase-like protein Arp1, found in Metarhizium brunneum (strain ARSEF 3297).